Reading from the N-terminus, the 508-residue chain is Pentatricopeptide repeat-containing protein At3g04130, mitochondrial (508 aa).

The transit peptide at 1–74 directs the protein to the mitochondrion; that stretch reads MSWLIQNRIG…DSEDDVFKRL (74 aa). 10 PPR repeats span residues 120-150, 154-188, 189-219, 223-257, 258-292, 293-327, 328-363, 364-398, 400-434, and 436-470; these read SSDA…MRGD, TLNT…GLEK, NTES…LKSH, NAHT…GFRP, CVIS…GSPP, NSIT…GCKP, DSLF…GVSI, NTST…NLCN, DVHT…HHLS, and DEST…DITP.

Belongs to the PPR family. P subfamily.

The protein resides in the mitochondrion. The protein is Pentatricopeptide repeat-containing protein At3g04130, mitochondrial of Arabidopsis thaliana (Mouse-ear cress).